Here is a 215-residue protein sequence, read N- to C-terminus: 3,4-dihydroxy-2-butanone 4-phosphate synthase (215 aa).

Residues 37 to 38 (RE), D42, 150 to 154 (RPGHT), and E174 contribute to the D-ribulose 5-phosphate site. E38 contributes to the Mg(2+) binding site. Mg(2+) is bound at residue H153.

Belongs to the DHBP synthase family. As to quaternary structure, homodimer. Requires Mg(2+) as cofactor. It depends on Mn(2+) as a cofactor.

It catalyses the reaction D-ribulose 5-phosphate = (2S)-2-hydroxy-3-oxobutyl phosphate + formate + H(+). It participates in cofactor biosynthesis; riboflavin biosynthesis; 2-hydroxy-3-oxobutyl phosphate from D-ribulose 5-phosphate: step 1/1. Its function is as follows. Catalyzes the conversion of D-ribulose 5-phosphate to formate and 3,4-dihydroxy-2-butanone 4-phosphate. This chain is 3,4-dihydroxy-2-butanone 4-phosphate synthase, found in Buchnera aphidicola subsp. Acyrthosiphon pisum (strain 5A).